Reading from the N-terminus, the 232-residue chain is Thiamine import ATP-binding protein ThiQ (232 aa).

An ABC transporter domain is found at 2–230; it reads LKLTDITWLY…KASASALLGI (229 aa). Residue 32–39 participates in ATP binding; the sequence is GPSGAGKS.

Belongs to the ABC transporter superfamily. Thiamine importer (TC 3.A.1.19.1) family. As to quaternary structure, the complex is composed of two ATP-binding proteins (ThiQ), two transmembrane proteins (ThiP) and a solute-binding protein (ThiB).

Its subcellular location is the cell inner membrane. It catalyses the reaction thiamine(out) + ATP + H2O = thiamine(in) + ADP + phosphate + H(+). Part of the ABC transporter complex ThiBPQ involved in thiamine import. Responsible for energy coupling to the transport system. The sequence is that of Thiamine import ATP-binding protein ThiQ from Escherichia coli O6:H1 (strain CFT073 / ATCC 700928 / UPEC).